A 137-amino-acid chain; its full sequence is Histone H2B (137 aa).

Over residues 1-10 the composition is skewed to basic and acidic residues; that stretch reads MAPKAADKKP. The segment at 1–45 is disordered; the sequence is MAPKAADKKPASKAPATASKAPEKKDAGKKTAPSGDKKKRTKARK. N6-acetyllysine; alternate occurs at positions 8 and 9. Glycyl lysine isopeptide (Lys-Gly) (interchain with G-Cter in SUMO); alternate cross-links involve residues K8 and K9. Phosphoserine is present on S12. K13 bears the N6-acetyllysine mark. K24 bears the N6-acetyllysine; alternate mark. K24 is covalently cross-linked (Glycyl lysine isopeptide (Lys-Gly) (interchain with G-Cter in SUMO); alternate). A Glycyl lysine isopeptide (Lys-Gly) (interchain with G-Cter in SUMO) cross-link involves residue K25. Residue K131 forms a Glycyl lysine isopeptide (Lys-Gly) (interchain with G-Cter in ubiquitin) linkage.

The protein belongs to the histone H2B family. As to quaternary structure, the nucleosome is a histone octamer containing two molecules each of H2A, H2B, H3 and H4 assembled in one H3-H4 heterotetramer and two H2A-H2B heterodimers. The octamer wraps approximately 147 bp of DNA. Monoubiquitinated by the UBC2-BRE1 complex to form H2BK123ub1. H2BK123ub1 gives a specific tag for epigenetic transcriptional activation and is also prerequisite for H3K4me and H3K79me formation. H2BK123ub1 also modulates the formation of double-strand breaks during meiosis and is a prerequisite for DNA-damage checkpoint activation. In terms of processing, phosphorylated to form H2BS10ph during progression through meiotic prophase. May be correlated with chromosome condensation. Post-translationally, acetylated by GCN5 to form H2BK11ac and H2BK16ac. H2BK16ac can also be formed by ESA1. Acetylation of N-terminal lysines and particularly formation of H2BK11acK16ac has a positive effect on transcription. Sumoylation to form H2BK6su or H2BK7su, and probably also H2BK16su or H2BK17su, occurs preferentially near the telomeres and represses gene transcription.

It is found in the nucleus. It localises to the chromosome. Core component of nucleosome. Nucleosomes wrap and compact DNA into chromatin, limiting DNA accessibility to the cellular machineries which require DNA as a template. Histones thereby play a central role in transcription regulation, DNA repair, DNA replication and chromosomal stability. DNA accessibility is regulated via a complex set of post-translational modifications of histones, also called histone code, and nucleosome remodeling. The protein is Histone H2B (HTB1) of Chaetomium globosum (strain ATCC 6205 / CBS 148.51 / DSM 1962 / NBRC 6347 / NRRL 1970) (Soil fungus).